Consider the following 287-residue polypeptide: Lactamase-like protein nscB (287 aa).

Zn(2+) contacts are provided by histidine 62, histidine 64, aspartate 66, and histidine 67. The Proton donor/acceptor role is filled by aspartate 66.

Belongs to the metallo-beta-lactamase superfamily. It depends on Zn(2+) as a cofactor.

It functions in the pathway secondary metabolite biosynthesis. In terms of biological role, lactamase-like protein; part of the gene cluster that mediates the biosynthesis of neosartoricin B, a prenylated anthracenone that probably exhibits T-cell antiproliferative activity, suggestive of a physiological role as an immunosuppressive agent. The non-reducing polyketide synthase nscA probably synthesizes and cyclizes the decaketide backbone. The hydrolase nscB then mediates the product release through hydrolysis followed by spontaneous decarboxylation. The prenyltransferase nscD catalyzes the addition of the dimethylallyl group to the aromatic C5. The FAD-dependent monooxygenase nscC is then responsible for the stereospecific hydroxylation at C2. Neosartoricin B can be converted into two additional compounds neosartoricins C and D. Neosartoricin C is a spirocyclic compound that is cyclized through the attack of C3 hydroxyl on C14, followed by dehydration. On the other hand, neosartoricin D is a further cyclized compound in which attack of C2 on C14 in neosartoricin C results in the formation of the acetal-containing dioxabicyclo-octanone ring. Both of these compounds are novel and possibly represent related metabolites of the gene cluster. This is Lactamase-like protein nscB from Trichophyton verrucosum (strain HKI 0517).